Here is a 196-residue protein sequence, read N- to C-terminus: Somatotropin (196 aa).

An N-terminal signal peptide occupies residues 1–16 (MDKVILVLLMSLGASS). Q17 carries the pyrrolidone carboxylic acid modification. Residue H35 coordinates Zn(2+). C67 and C169 are disulfide-bonded. E178 contacts Zn(2+). Cysteines 186 and 194 form a disulfide.

The protein belongs to the somatotropin/prolactin family.

The protein resides in the secreted. In terms of biological role, growth hormone plays an important role in growth control and is involved in the regulation of several anabolic processes. Implicated as an osmoregulatory substance important for seawater adaptation. This chain is Somatotropin (gh), found in Takifugu rubripes (Japanese pufferfish).